Consider the following 143-residue polypeptide: Antiholin-like protein LrgA (143 aa).

The next 4 helical transmembrane spans lie at 6-26, 30-50, 61-81, and 97-117; these read VYSF…SNII, LPIP…LLCL, LGTA…ISVI, and VIVV…QFIL.

This sequence belongs to the CidA/LrgA family. LrgA subfamily.

It localises to the cell membrane. Functionally, inhibits the expression or activity of extracellular murein hydrolases by interacting, possibly with LrgB, with the holin-like protein CidA. The LrgAB and CidA proteins may affect the proton motive force of the membrane. May be involved in programmed cell death (PCD), possibly triggering PCD in response to antibiotics and environmental stresses. The chain is Antiholin-like protein LrgA from Bacillus cereus (strain AH187).